The sequence spans 273 residues: Homeobox protein HMX2 (273 aa).

The segment at 1–152 (MGSKEDAGKG…RQAGAAKKKT (152 aa)) is disordered. Gly residues predominate over residues 93-102 (KGSGGSGPGG). Residues 114–123 (SDFKEEKERL) show a composition bias toward basic and acidic residues. Residues 149-208 (KKKTRTVFSRSQVYQLESTFDMKRYLSSSERACLASSLQLTETQVKTWFQNRRNKWKRQL) constitute a DNA-binding region (homeobox).

Belongs to the HMX homeobox family.

It localises to the nucleus. Transcription factor involved in specification of neuronal cell types and which is required for inner ear and hypothalamus development. The sequence is that of Homeobox protein HMX2 (HMX2) from Homo sapiens (Human).